Consider the following 879-residue polypeptide: Phosphoenolpyruvate carboxylase (879 aa).

Residues His138 and Lys545 contribute to the active site.

Belongs to the PEPCase type 1 family. The cofactor is Mg(2+).

It carries out the reaction oxaloacetate + phosphate = phosphoenolpyruvate + hydrogencarbonate. Forms oxaloacetate, a four-carbon dicarboxylic acid source for the tricarboxylic acid cycle. The sequence is that of Phosphoenolpyruvate carboxylase from Haemophilus influenzae (strain 86-028NP).